The following is a 364-amino-acid chain: Phosrestin-2 (364 aa).

It belongs to the arrestin family. Phosphorylated, but does not undergo light-induced phosphorylation. As to expression, expressed specifically and abundantly in photoreceptor cells in retina and ocelli.

It is found in the cell projection. The protein resides in the rhabdomere. Its function is as follows. Regulates photoreceptor cell deactivation. Arr1 and Arr2 proteins are mediators of rhodopsin inactivation and are essential for the termination of the phototransduction cascade. Involved in regulating normal cycles of per nuclear accumulation in brain circadian neurons and thus is important for normal circadian behavior. In the dark, functions with Arr2 to promote the formation of cytosolic Bdbt foci, which are required for dco localization to photoreceptor nuclei where it phosphorylates and activates degradation of per. The sequence is that of Phosrestin-2 (Arr1) from Drosophila melanogaster (Fruit fly).